The following is a 1594-amino-acid chain: RB1-inducible coiled-coil protein 1 (1594 aa).

Phosphoserine occurs at positions 222, 229, and 237. Position 238 is a phosphothreonine (Thr-238). Ser-243, Ser-253, Ser-257, Ser-261, and Ser-266 each carry phosphoserine. Residues 566–569 (KPRK) carry the Nuclear localization signal motif. Ser-624, Ser-647, Ser-650, Ser-652, Ser-653, Ser-734, Ser-1091, Ser-1222, Ser-1370, and Ser-1484 each carry phosphoserine. The tract at residues 638–673 (EQKASVSQTSPQSASSPRMESTAGITTTTSPRTPPP) is disordered. Low complexity predominate over residues 641 to 654 (ASVSQTSPQSASSP). Positions 731–737 (DFMSAVN) match the FFAT motif. Coiled coils occupy residues 859-1397 (LKEK…SSSF) and 1438-1485 (METS…SQSM).

The protein belongs to the ATG17 family. Part of a complex consisting of ATG13/KIAA0652, ULK1 and RB1CC1. This complex associates with ATG101. Interacts with PTK2/FAK1 and PTK2B/PYK2. Interacts with GABARAP and GABARAPL1. Interacts with ATG16L1; the interaction is required for ULK1 complex-dependent autophagy. Interacts with RNF111, SKI and SMAD7. Interacts with COP1 in the cytoplasm of proliferating cells in response to UV stimulation. Interacts with TP53. Interacts with C9orf72. Interacts with WDR45B. Interacts with ATG13; this interaction is increased in the absence of TMEM39A. Interacts with WIPI2. Interacts with TAX1BP1. Interacts (via phosphorylated FFAT motif) with MOSPD2, VAPA and VAPB. In terms of processing, phosphorylation at Ser-734 of the FFAT motif activates interaction with MOSPD2, VAPA and VAPB. Expression levels correlated closely with those of RB1 in cancer cell lines as well as in various normal human tissues. Abundantly expressed in human musculoskeletal and cultured osteosarcoma cells.

It is found in the nucleus. Its subcellular location is the cytoplasm. The protein resides in the cytosol. The protein localises to the preautophagosomal structure. It localises to the lysosome. Involved in autophagy. Regulates early events but also late events of autophagosome formation through direct interaction with Atg16L1. Required for the formation of the autophagosome-like double-membrane structure that surrounds the Salmonella-containing vacuole (SCV) during S.typhimurium infection and subsequent xenophagy. Involved in repair of DNA damage caused by ionizing radiation, which subsequently improves cell survival by decreasing apoptosis. Inhibits PTK2/FAK1 and PTK2B/PYK2 kinase activity, affecting their downstream signaling pathways. Plays a role as a modulator of TGF-beta-signaling by restricting substrate specificity of RNF111. Functions as a DNA-binding transcription factor. Is a potent regulator of the RB1 pathway through induction of RB1 expression. Plays a crucial role in muscular differentiation. Plays an indispensable role in fetal hematopoiesis and in the regulation of neuronal homeostasis. This chain is RB1-inducible coiled-coil protein 1, found in Homo sapiens (Human).